Reading from the N-terminus, the 412-residue chain is uncharacterized protein (412 aa).

His49 contributes to the Zn(2+) binding site. Glu52 serves as the catalytic Proton acceptor. Zn(2+) is bound by residues His53 and Glu129.

The protein belongs to the peptidase M16 family. Requires Zn(2+) as cofactor.

This is an uncharacterized protein from Rickettsia bellii (strain RML369-C).